A 147-amino-acid polypeptide reads, in one-letter code: uncharacterized protein (147 aa).

Disordered stretches follow at residues 1 to 49 and 125 to 147; these read MRTP…NLNE and SPSP…RKSN. Composition is skewed to low complexity over residues 8 to 49 and 125 to 140; these read NNNY…NLNE and SPSP…PQNT.

This is an uncharacterized protein from Dictyostelium discoideum (Social amoeba).